The chain runs to 89 residues: Small ribosomal subunit protein uS15 (89 aa).

Basic and acidic residues predominate over residues M1 to D21. A disordered region spans residues M1 to E26.

It belongs to the universal ribosomal protein uS15 family. As to quaternary structure, part of the 30S ribosomal subunit. Forms a bridge to the 50S subunit in the 70S ribosome, contacting the 23S rRNA.

In terms of biological role, one of the primary rRNA binding proteins, it binds directly to 16S rRNA where it helps nucleate assembly of the platform of the 30S subunit by binding and bridging several RNA helices of the 16S rRNA. Functionally, forms an intersubunit bridge (bridge B4) with the 23S rRNA of the 50S subunit in the ribosome. The sequence is that of Small ribosomal subunit protein uS15 from Erythrobacter litoralis (strain HTCC2594).